The primary structure comprises 602 residues: Threonine--tRNA ligase (602 aa).

The interval 208–499 (DHRKLGTELK…LTEHCAGEFP (292 aa)) is catalytic. Zn(2+) is bound by residues Cys-300, His-351, and His-476.

This sequence belongs to the class-II aminoacyl-tRNA synthetase family. In terms of assembly, homodimer. It depends on Zn(2+) as a cofactor.

The protein resides in the cytoplasm. It catalyses the reaction tRNA(Thr) + L-threonine + ATP = L-threonyl-tRNA(Thr) + AMP + diphosphate + H(+). Its function is as follows. Catalyzes the attachment of threonine to tRNA(Thr) in a two-step reaction: L-threonine is first activated by ATP to form Thr-AMP and then transferred to the acceptor end of tRNA(Thr). Also edits incorrectly charged L-seryl-tRNA(Thr). The chain is Threonine--tRNA ligase from Campylobacter jejuni (strain RM1221).